Here is a 399-residue protein sequence, read N- to C-terminus: CLOCK-interacting pacemaker (399 aa).

Positions 1–12 are enriched in basic and acidic residues; the sequence is MERKNSSRESPR. Disordered regions lie at residues 1-85 and 159-224; these read MERK…AKNA and SYTK…KLAE. S213 is subject to Phosphoserine. A coiled-coil region spans residues 333–359; the sequence is TLKTKELIRQNQATQVELDQLKEQTQL. A compositionally biased stretch (polar residues) spans 378–388; that stretch reads SLTPGSSNTGS. The disordered stretch occupies residues 378–399; sequence SLTPGSSNTGSDLEAFSDHPDI.

Interacts with CLOCK. Forms a ternary complex with the CLOCK-BMAL1 heterodimer. Interacts with CAD and HSPA5.

It is found in the nucleus. Its subcellular location is the cytoplasm. It localises to the cytosol. Functionally, transcriptional repressor which may act as a negative-feedback regulator of CLOCK-BMAL1 transcriptional activity in the circadian-clock mechanism. May stimulate BMAL1-dependent phosphorylation of CLOCK. However, the physiological relevance of these observations is unsure, since experiments in knockout mice showed that CIPC is not critially required for basic circadian clock. In Pongo abelii (Sumatran orangutan), this protein is CLOCK-interacting pacemaker (CIPC).